The chain runs to 765 residues: Zinc finger and BTB domain-containing protein 49 (765 aa).

In terms of domain architecture, BTB spans Cys25–Gln91. 2 disordered regions span residues Gln165 to Thr203 and Asn275 to Cys294. C2H2-type zinc fingers lie at residues Tyr395–His417, Phe423–His445, Tyr451–His473, His479–His501, Phe507–His529, Tyr535–His557, and Tyr563–His585.

It belongs to the krueppel C2H2-type zinc-finger protein family. In terms of assembly, isoform 1 interacts with EP300 and KAT5/Tip60. The interaction with EP300 is direct and leads to synergistic induction of CDKN1A. On the CDKN1A promoter, forms a complex with ZBTB17/Miz-1; this interaction leads to additive CDKN1A transactivation. Isoform 3 also interacts with ZBTB17; this interaction may block ZBTB17 repressor activity. In terms of tissue distribution, highly expressed in normal epidermis and in other epithelial tissues, including in colon and lung. Tends to be down-regulated in colon, lung and skin cancer tissues.

It localises to the cytoplasm. The protein localises to the nucleus. Its function is as follows. Transcription factor. Inhibits cell proliferation by activating either CDKN1A/p21 transcription or RB1 transcription. In terms of biological role, binds CDKN1A promoter and activates its transcription; this activity is further potentiated in the presence of EP300 (synergistic) and ZBTB17/Miz-1 (additive). Functionally, activates RB1 transcription most probably by antagonizing ZBTB17 repression of RB1. Does not bind directly RB1 promoter. The chain is Zinc finger and BTB domain-containing protein 49 (ZBTB49) from Homo sapiens (Human).